The primary structure comprises 509 residues: Maturase K (509 aa).

It belongs to the intron maturase 2 family. MatK subfamily.

The protein resides in the plastid. It is found in the chloroplast. In terms of biological role, usually encoded in the trnK tRNA gene intron. Probably assists in splicing its own and other chloroplast group II introns. This chain is Maturase K, found in Nicotiana alata (Winged tobacco).